Here is a 438-residue protein sequence, read N- to C-terminus: Battenin (438 aa).

Positions methionine 1 to tyrosine 29 are disordered. Over methionine 1 to asparagine 37 the chain is Cytoplasmic. Serine 14 carries the phosphoserine modification. A helical membrane pass occupies residues valine 38–alanine 58. At alanine 59–arginine 127 the chain is on the lumenal side. Positions alanine 68 to arginine 89 are disordered. Residues asparagine 71 and asparagine 85 are each glycosylated (N-linked (GlcNAc...) asparagine). A helical transmembrane segment spans residues valine 128 to valine 148. At glycine 149–serine 151 the chain is on the cytoplasmic side. Residues leucine 152–leucine 172 form a helical membrane-spanning segment. Residues threonine 173–serine 182 are Lumenal-facing. A helical membrane pass occupies residues tryptophan 183–threonine 203. Residues glutamine 204–valine 277 are Cytoplasmic-facing. Residues proline 236–serine 267 are disordered. The Lysosomal targeting motif signature appears at glutamate 242–glutamate 244. Residues leucine 253–isoleucine 254 carry the Lysosomal targeting motif. Required for AP1G1, AP2A2 and AP3D1 interaction motif. The helical transmembrane segment at phenylalanine 278 to isoleucine 298 threads the bilayer. Residues asparagine 299 to tryptophan 346 are Lumenal-facing. Asparagine 310 carries N-linked (GlcNAc...) asparagine glycosylation. The helical transmembrane segment at valine 347 to phenylalanine 367 threads the bilayer. At leucine 368 to serine 438 the chain is on the cytoplasmic side. Positions methionine 409–glycine 419 match the Lysosomal targeting motif motif. A Cysteine methyl ester modification is found at cysteine 435. Cysteine 435 is lipidated: S-farnesyl cysteine. The propeptide at histidine 436 to serine 438 is removed in mature form.

It belongs to the battenin family. As to quaternary structure, interacts with DCTN1, KIF3A, RAB7A and RILP. Interacts with CLN5. Highly glycosylated. Post-translationally, farnesylation is important for trafficking to lysosomes.

It localises to the lysosome membrane. Its subcellular location is the late endosome. The protein resides in the lysosome. Mediates microtubule-dependent, anterograde transport connecting the Golgi network, endosomes, autophagosomes, lysosomes and plasma membrane, and participates in several cellular processes such as regulation of lysosomal pH, lysosome protein degradation, receptor-mediated endocytosis, autophagy, transport of proteins and lipids from the TGN, apoptosis and synaptic transmission. Facilitates the proteins transport from trans-Golgi network (TGN)-to other membrane compartments such as transport of microdomain-associated proteins to the plasma membrane, IGF2R transport to the lysosome where it regulates the CTSD release leading to regulation of CTSD maturation and thereby APP intracellular processing. Moreover regulates CTSD activity in response to osmotic stress. Also binds galactosylceramide and transports it from the trans Golgi to the rafts, which may have immediate and downstream effects on cell survival by modulating ceramide synthesis. At the plasma membrane, regulates actin-dependent events including filopodia formation, cell migration, and pinocytosis through ARF1-CDC42 pathway and also the cytoskeleton organization through interaction with MYH10 and fodrin leading to the regulation of the plasma membrane association of Na+, K+ ATPase complex. Regulates synaptic transmission in the amygdala, hippocampus, and cerebellum through regulation of synaptic vesicles density and their proximity to active zones leading to modulation of short-term plasticity and age-dependent anxious behavior, learning and memory. Regulates autophagic vacuoles (AVs) maturation by modulating the trafficking between endocytic and autophagolysosomal/lysosomal compartments, which involves vesicle fusion leading to regulation of degradation process. Also participates in cellular homeostasis of compounds such as, water, ions, amino acids, proteins and lipids in several tissue namely in brain and kidney through regulation of their transport and synthesis. This chain is Battenin, found in Canis lupus familiaris (Dog).